A 361-amino-acid chain; its full sequence is Tegument protein UL51 homolog (361 aa).

Residue Cys8 is the site of S-palmitoyl cysteine; by host attachment. The segment at 251-299 (GDEEDEVTVMSPSPEPVQQQPPVEPVQQQPQGRGSHRRRYKESAPQETL) is disordered. Over residues 266-281 (PVQQQPPVEPVQQQPQ) the composition is skewed to low complexity.

It belongs to the herpesviridae UL51 family. As to quaternary structure, oligomerizes. Interacts with UL103; this interaction mediates UL103 incorporation to virions. In terms of processing, phosphorylated. Post-translationally, palmitoylation is necessary for Golgi localization.

The protein localises to the virion tegument. It localises to the host cytoplasm. Its subcellular location is the host Golgi apparatus. Its function is as follows. Plays several roles during the time course of infection, including egress of virus particles from the perinuclear space and secondary envelopment of cytoplasmic capsids that bud into specific trans-Golgi network (TGN)-derived membranes. This is Tegument protein UL51 homolog (UL71) from Homo sapiens (Human).